We begin with the raw amino-acid sequence, 931 residues long: Isoleucine--tRNA ligase (931 aa).

Positions 57–67 match the 'HIGH' region motif; it reads PYANGNIHIGH. Glu-555 contributes to the L-isoleucyl-5'-AMP binding site. The 'KMSKS' region signature appears at 596–600; that stretch reads KMSKS. Residue Lys-599 participates in ATP binding. Positions 890, 893, 910, and 913 each coordinate Zn(2+).

This sequence belongs to the class-I aminoacyl-tRNA synthetase family. IleS type 1 subfamily. Monomer. It depends on Zn(2+) as a cofactor.

It localises to the cytoplasm. The enzyme catalyses tRNA(Ile) + L-isoleucine + ATP = L-isoleucyl-tRNA(Ile) + AMP + diphosphate. Functionally, catalyzes the attachment of isoleucine to tRNA(Ile). As IleRS can inadvertently accommodate and process structurally similar amino acids such as valine, to avoid such errors it has two additional distinct tRNA(Ile)-dependent editing activities. One activity is designated as 'pretransfer' editing and involves the hydrolysis of activated Val-AMP. The other activity is designated 'posttransfer' editing and involves deacylation of mischarged Val-tRNA(Ile). The chain is Isoleucine--tRNA ligase from Limosilactobacillus reuteri subsp. reuteri (strain JCM 1112) (Lactobacillus reuteri).